The following is a 520-amino-acid chain: MKPKKLGIIGGSLLAFGILICAIAFPPFLRSQVKKQIALKDGSEMRELWSNFPVPLDFKIYLFNVTNPMEITAGEKPILEEVGPFFYDEYKQKVDLVDREEDDSLEYNLKATWFFNPSRSEGLTGEEELIVPHVLILSMIKLTLEQQPAAMGILNKAVDNIFKKPESVFVRAKAREILFDGLPVDCTGKDFASSAICSVLKEKDDALIADGPGRYLFSLFGPKNGTVLPERIRVLRGIKNYKDVGKVTEVNGKTKLDIWGEGDCNEFNGTDSTIFAPLLTEQDDIVSFAPDICRSMGARFDSYTKVKGINTYHYKADLGDMSSHPEEKCFCPSPDSCLTKNLMDLTKCVGAPLIASLPHLLGAEEKYLKMVDGLHPNEEEHGIAMDFEPMTATPLSAHKRLQFNLYLHKVAKFKLMKNFPECLFPIFWVEEGILLGDEFVKKLKTVFKTISIVGFMKWFTIVSGTCVSGAAAALFFKNKDKNKLDITKVTPQKGEEKKWPNQMTISTIQSAAVPPNLDAD.

Over 1-5 (MKPKK) the chain is Cytoplasmic. Residues 6–26 (LGIIGGSLLAFGILICAIAFP) form a helical membrane-spanning segment. Residues 27-451 (PFLRSQVKKQ…KLKTVFKTIS (425 aa)) lie on the Extracellular side of the membrane. Asn64, Asn224, and Asn268 each carry an N-linked (GlcNAc...) asparagine glycan. 3 cysteine pairs are disulfide-bonded: Cys264–Cys329, Cys293–Cys348, and Cys331–Cys337. A helical transmembrane segment spans residues 452–472 (IVGFMKWFTIVSGTCVSGAAA). Residues 473-520 (ALFFKNKDKNKLDITKVTPQKGEEKKWPNQMTISTIQSAAVPPNLDAD) are Cytoplasmic-facing.

It belongs to the CD36 family.

It localises to the cell membrane. Functionally, plays an olfactory role that is not restricted to pheromone sensitivity. The polypeptide is Sensory neuron membrane protein 1 (Apis mellifera (Honeybee)).